A 498-amino-acid polypeptide reads, in one-letter code: ATP synthase subunit beta, chloroplastic (498 aa).

Position 172–179 (172–179 (GGAGVGKT)) interacts with ATP.

The protein belongs to the ATPase alpha/beta chains family. In terms of assembly, F-type ATPases have 2 components, CF(1) - the catalytic core - and CF(0) - the membrane proton channel. CF(1) has five subunits: alpha(3), beta(3), gamma(1), delta(1), epsilon(1). CF(0) has four main subunits: a(1), b(1), b'(1) and c(9-12).

It localises to the plastid. It is found in the chloroplast thylakoid membrane. It catalyses the reaction ATP + H2O + 4 H(+)(in) = ADP + phosphate + 5 H(+)(out). Its function is as follows. Produces ATP from ADP in the presence of a proton gradient across the membrane. The catalytic sites are hosted primarily by the beta subunits. In Solanum lycopersicum (Tomato), this protein is ATP synthase subunit beta, chloroplastic.